We begin with the raw amino-acid sequence, 322 residues long: Aspartate carbamoyltransferase catalytic subunit (322 aa).

Positions 65 and 66 each coordinate carbamoyl phosphate. L-aspartate is bound at residue Lys-93. Carbamoyl phosphate contacts are provided by Arg-115, His-143, and Gln-146. Arg-176 and Arg-230 together coordinate L-aspartate. Residues Gly-271 and Pro-272 each contribute to the carbamoyl phosphate site.

This sequence belongs to the aspartate/ornithine carbamoyltransferase superfamily. ATCase family. In terms of assembly, heterododecamer (2C3:3R2) of six catalytic PyrB chains organized as two trimers (C3), and six regulatory PyrI chains organized as three dimers (R2).

The enzyme catalyses carbamoyl phosphate + L-aspartate = N-carbamoyl-L-aspartate + phosphate + H(+). The protein operates within pyrimidine metabolism; UMP biosynthesis via de novo pathway; (S)-dihydroorotate from bicarbonate: step 2/3. Functionally, catalyzes the condensation of carbamoyl phosphate and aspartate to form carbamoyl aspartate and inorganic phosphate, the committed step in the de novo pyrimidine nucleotide biosynthesis pathway. The protein is Aspartate carbamoyltransferase catalytic subunit of Brucella abortus (strain S19).